We begin with the raw amino-acid sequence, 65 residues long: Large ribosomal subunit protein uL29 (65 aa).

Belongs to the universal ribosomal protein uL29 family.

The chain is Large ribosomal subunit protein uL29 from Natranaerobius thermophilus (strain ATCC BAA-1301 / DSM 18059 / JW/NM-WN-LF).